Consider the following 433-residue polypeptide: L-lysine 2,3-aminomutase (433 aa).

In terms of domain architecture, Radical SAM core spans 122-334; sequence HRYPDRVLFY…SLIGHTTGFA (213 aa). [4Fe-4S] cluster contacts are provided by C136, C140, and C143. A Zn(2+)-binding site is contributed by C279. Residue K348 is modified to N6-(pyridoxal phosphate)lysine. Zn(2+) is bound by residues C389, C392, and C396.

The protein belongs to the radical SAM superfamily. KamA family. It depends on [4Fe-4S] cluster as a cofactor. The cofactor is pyridoxal 5'-phosphate. Requires Zn(2+) as cofactor.

It catalyses the reaction L-lysine = (3S)-3,6-diaminohexanoate. In terms of biological role, catalyzes the interconversion of L-alpha-lysine and L-beta-lysine. Is involved in the biosynthesis pathway of N6-acetyl-beta-lysine, a compatible solute produced by methanogenic archaea that helps cells to cope with salt stress. In Methanococcus maripaludis (strain DSM 14266 / JCM 13030 / NBRC 101832 / S2 / LL), this protein is L-lysine 2,3-aminomutase (ablA).